The chain runs to 577 residues: MPRVPSASATGSSALLSLLCAFSLGRAAPFQLTILHTNDVHARVEETNQDSGKCFTQSFAGVARRWTKIEELRARDKNVLLLDAGDQYQGTIWFNYYKGAEAAHFIEAVGYNAMALGNHEFDNGAEGLLDPFLLNVSFPVLSANLEQGEDQVPSLIGYYKPSTVLDVNGEKIGVVGYTSKETPTLSSPGPHLIFKDEIQAVQHEVDILVSQGIDKIIALGHSGFETDKLIAQKVRGVDVVVGGHSNTFLYTGKAPSNDVPVGPYPFLVNSDDQRTIPVVQAYAYGKYLGYLKLTFDKGEVIKREGNPILLNSSIIQDPVLLAEVNKWKESLANFGKEVIGRTVVYLNGTTEECRNRECNMGNLICDAMIQQNIRNPDEKFWNHVSICIFQGGGIRAPINEQNNGTIQVDSLLAVLPFGSTIDLLEVYGSTLRAAFDHSVRRYGQNTGEFLQVSGIQVQFNLKRPPGSRVVKIDVLCADCRVPHYQPLLDNKIYKIVTNSYIAEGGDGFTMLKNERLRYDTGSTDISVVSSYIKQMKVVYPAVEGRILFVENSATLPIINLKIGLSLFAFLTWFLHCS.

The first 30 residues, 1–30 (MPRVPSASATGSSALLSLLCAFSLGRAAPF), serve as a signal peptide directing secretion. Zn(2+)-binding residues include Asp-39, His-41, Asp-86, and Asn-118. A glycan (N-linked (GlcNAc...) asparagine) is linked at Asn-135. Positions 221 and 244 each coordinate Zn(2+). Asn-246 lines the substrate pocket. N-linked (GlcNAc...) asparagine glycosylation is found at Asn-311 and Asn-347. Intrachain disulfides connect Cys-353–Cys-358 and Cys-365–Cys-387. Arg-354 is a substrate binding site. Positions 390 and 395 each coordinate substrate. N-linked (GlcNAc...) asparagine glycosylation occurs at Asn-403. Phe-417 is a substrate binding site. Cys-476 and Cys-479 form a disulfide bridge. 500-506 (YIAEGGD) is a binding site for substrate. The GPI-anchor amidated serine moiety is linked to residue Ser-552. The propeptide at 553 to 577 (ATLPIINLKIGLSLFAFLTWFLHCS) is removed in mature form.

Belongs to the 5'-nucleotidase family. Homodimer. The cofactor is Zn(2+).

It is found in the cell membrane. It carries out the reaction a ribonucleoside 5'-phosphate + H2O = a ribonucleoside + phosphate. In terms of biological role, hydrolyzes extracellular nucleotides into membrane permeable nucleosides. This is 5'-nucleotidase from Diplobatis ommata (Ocellated electric ray).